Here is a 655-residue protein sequence, read N- to C-terminus: Methyl-accepting chemotaxis protein McpC (655 aa).

Topologically, residues 1–8 (MFKKLHMK) are cytoplasmic. A helical transmembrane segment spans residues 9–29 (IAVFVSIMLIITVVLLMLSSY). Topologically, residues 30–276 (LTLKPMITED…LMWISDKMNR (247 aa)) are extracellular. Residues 148-225 (WTEPYKDVVT…SNQGKNISKD (78 aa)) enclose the Cache domain. The chain crosses the membrane as a helical span at residues 277–297 (ANLWISLIALIITIILSYFLA). Residues 298–350 (KTITGPIQQLIVKTKAVSAGDLTVRAESKSKDEVGILTRDFNLMVENMKEMVE) enclose the HAMP domain. Over 298–655 (KTITGPIQQL…LMNTIAKFTL (358 aa)) the chain is Cytoplasmic. The Methyl-accepting transducer domain maps to 369-619 (VAAETNETSG…ESAAAAEEVN (251 aa)).

The protein belongs to the methyl-accepting chemotaxis (MCP) protein family. Interacts with FloT. Some glutamine residues are deamidated to glutamate by CheD and subsequently methylated.

Its subcellular location is the cell membrane. It is found in the membrane raft. Chemotactic-signal transducers respond to changes in the concentration of attractants and repellents in the environment, transduce a signal from the outside to the inside of the cell, and facilitate sensory adaptation through the variation of the level of methylation. All amino acids serve as attractants in B.subtilis, they appear to cause an increase in the turnover methyl groups, leading to methylation of an unidentified acceptor, while repellents have been shown to cause a decrease in methyl group turnover. The methyl groups are added by a methyltransferase and removed by a methylesterase. McpC is required for taxis to cysteine, proline, threonine, glycine, serine, lysine, valine and arginine and for aspartate, glutamine, histidine and glutamate. Primarily mediates response to positive stimulus of PTS carbohydrates. Greatly influences the duration or magnitude of the response to negative PTS carbohydrate stimulus. The sequence is that of Methyl-accepting chemotaxis protein McpC (mcpC) from Bacillus subtilis (strain 168).